The chain runs to 746 residues: Long-chain-alcohol oxidase FAO3 (746 aa).

The chain crosses the membrane as a helical span at residues 139–159; sequence ILTPIRAAFVYIKVAFLFCFF. 233 to 248 is an FAD binding site; it reads CDVVVVGSGSGGGVAA. His-677 functions as the Proton acceptor in the catalytic mechanism.

Belongs to the GMC oxidoreductase family.

The protein localises to the membrane. The enzyme catalyses a long-chain primary fatty alcohol + O2 = a long-chain fatty aldehyde + H2O2. In terms of biological role, long-chain fatty alcohol oxidase involved in the omega-oxidation pathway of lipid degradation. This chain is Long-chain-alcohol oxidase FAO3 (FAO3), found in Arabidopsis thaliana (Mouse-ear cress).